The primary structure comprises 246 residues: tRNA (guanine-N(1)-)-methyltransferase (246 aa).

Residues Gly114 and 134 to 139 (IGDYIL) contribute to the S-adenosyl-L-methionine site. Basic and acidic residues predominate over residues 219-231 (LRRPDLWERHEGA). The interval 219–246 (LRRPDLWERHEGARAQSPSGARRQKKER) is disordered.

This sequence belongs to the RNA methyltransferase TrmD family. In terms of assembly, homodimer.

The protein localises to the cytoplasm. The enzyme catalyses guanosine(37) in tRNA + S-adenosyl-L-methionine = N(1)-methylguanosine(37) in tRNA + S-adenosyl-L-homocysteine + H(+). In terms of biological role, specifically methylates guanosine-37 in various tRNAs. The protein is tRNA (guanine-N(1)-)-methyltransferase of Rhizorhabdus wittichii (strain DSM 6014 / CCUG 31198 / JCM 15750 / NBRC 105917 / EY 4224 / RW1) (Sphingomonas wittichii).